Consider the following 293-residue polypeptide: Ribosomal protein L11 methyltransferase (293 aa).

Positions 145, 166, 188, and 230 each coordinate S-adenosyl-L-methionine.

The protein belongs to the methyltransferase superfamily. PrmA family.

The protein localises to the cytoplasm. The catalysed reaction is L-lysyl-[protein] + 3 S-adenosyl-L-methionine = N(6),N(6),N(6)-trimethyl-L-lysyl-[protein] + 3 S-adenosyl-L-homocysteine + 3 H(+). Its function is as follows. Methylates ribosomal protein L11. The protein is Ribosomal protein L11 methyltransferase of Actinobacillus pleuropneumoniae serotype 5b (strain L20).